Consider the following 1032-residue polypeptide: MALIMEPVSKWSPSQVVDWMKGLDDCLQQYIKNFEREKISGDQLLRITHQELEDLGVSRIGHQELILEAVDLLCALNYGLETENLKTLSHKLNASAKNLQNFITGRRRSGHYDGRTSRKLPNDFLTSVVDLIGAAKSLLAWLDRSPFAAVTDYSVTRNNVIQLCLELTTIVQQDCTVYETENKILHVCKTLSGVCDHIISLSSDPLVSQSAHLEVIQLANIKPSEGLGMYIKSTYDGLHVITGTTENSPADRCKKIHAGDEVIQVNHQTVVGWQLKNLVNALREDPSGVILTLKKRPQSMLTSAPALLKNMRWKPLALQPLIPRSPTSSVATPSSTISTPTKRDSSALQDLYIPPPPAEPYIPRDEKGNLPCEDLRGHMVGKPVHKGSESPNSFLDQEYRKRFNIVEEDTVLYCYEYEKGRSSSQGRRESTPTYGKLRPISMPVEYNWVGDYEDPNKMKRDSRRENSLLRYMSNEKIAQEEYMFQRNSKKDTGKKSKKKGDKSTSPTHYSLLPSLQMDALRQDIMGTPVPETTLYHTFQQSSLQHKSKKKNKGAIAGKSKRRISCKDLGRGDCEGWLWKKKDAKSYFSQKWKKYWFVLKDASLYWYINEEDEKAEGFISLPEFKIDRASECRKKYAFKACHPKIKSFYFAAEHLDDMNRWLNRINMLTAGYAERERIKQEQDYWSESDKEEADTPSTPKQDSPPPPYDTYPRPPSMSCASPYVEAKHSRLSSTETSQSQSSHEEFRQEVTGSSAVSPIRKTASQRRSWQDLIETPLTSSGLHYLQTLPLEDSVFSDSAAISPEHRRQSTLPTQKCHLQDHYGPYPLAESERMQVLNGNGGKPRSFTLPRDSGFNHCCLNAPVSACDPQDDIQPPEVEEEEEEEEEEAAGENIGEKNENREEKLGDSLQDLYRALEEASLSPLGEHRISTKIEYKLSFIKRCNDPVMNEKLHRLRILKSTLKAREGEVAIIDKVLDNPDLTSKEFQQWKQMYLDLFLDICQNTTSNDPLSISSEVDVITSSLTHTHSYIETHV.

One can recognise an SAM domain in the interval 11–76 (WSPSQVVDWM…LEAVDLLCAL (66 aa)). Serine 12 bears the Phosphoserine mark. In terms of domain architecture, CRIC spans 84-178 (NLKTLSHKLN…TIVQQDCTVY (95 aa)). In terms of domain architecture, PDZ spans 215 to 297 (VIQLANIKPS…GVILTLKKRP (83 aa)). Over residues 324–340 (RSPTSSVATPSSTISTP) the composition is skewed to low complexity. The interval 324-349 (RSPTSSVATPSSTISTPTKRDSSALQ) is disordered. The region spanning 332–515 (TPSSTISTPT…PTHYSLLPSL (184 aa)) is the DUF1170 domain. 2 positions are modified to phosphoserine: serine 338 and serine 390. The interval 480-509 (EEYMFQRNSKKDTGKKSKKKGDKSTSPTHY) is disordered. Positions 570–669 (RGDCEGWLWK…WLNRINMLTA (100 aa)) constitute a PH domain. The segment at 682–766 (DYWSESDKEE…PIRKTASQRR (85 aa)) is disordered. Phosphotyrosine is present on tyrosine 683. Residues 683–693 (YWSESDKEEAD) show a composition bias toward acidic residues. A phosphoserine mark is found at serine 685 and serine 687. Residues 701 to 714 (DSPPPPYDTYPRPP) show a composition bias toward pro residues. Residues 730–740 (LSSTETSQSQS) show a composition bias toward low complexity. Residues serine 756 and serine 767 each carry the phosphoserine modification. A disordered region spans residues 866–900 (DPQDDIQPPEVEEEEEEEEEEAAGENIGEKNENRE). Residues 874–917 (PEVEEEEEEEEEEAAGENIGEKNENREEKLGDSLQDLYRALEEA) adopt a coiled-coil conformation. The segment covering 875–888 (EVEEEEEEEEEEAA) has biased composition (acidic residues). The residue at position 906 (serine 906) is a Phosphoserine.

This sequence belongs to the CNKSR family. As to quaternary structure, interacts with RAF1, RAB2L and RAL GTPase proteins. Interacts with DLG4 and AIP1. Post-translationally, phosphorylated on tyrosine. As to expression, expressed in neurons and localized in the cell body and neurites.

The protein localises to the cytoplasm. The protein resides in the membrane. In terms of biological role, may function as an adapter protein or regulator of Ras signaling pathways, in synaptic junctions. The chain is Connector enhancer of kinase suppressor of ras 2 (Cnksr2) from Rattus norvegicus (Rat).